The sequence spans 347 residues: D-fructose 1,6-bisphosphatase class 2/sedoheptulose 1,7-bisphosphatase (347 aa).

The Mn(2+) site is built by Asp-33, Glu-57, Asp-97, and Glu-100. Substrate-binding positions include 100–102, Tyr-131, 176–178, and 198–200; these read EGT, RKR, and DGD. Position 225 (Glu-225) interacts with Mn(2+).

It belongs to the FBPase class 2 family. Homotetramer. It depends on Mn(2+) as a cofactor.

The enzyme catalyses beta-D-fructose 1,6-bisphosphate + H2O = beta-D-fructose 6-phosphate + phosphate. It catalyses the reaction D-sedoheptulose 1,7-bisphosphate + H2O = D-sedoheptulose 7-phosphate + phosphate. It participates in carbohydrate biosynthesis; Calvin cycle. Its function is as follows. Catalyzes the hydrolysis of fructose 1,6-bisphosphate (Fru 1,6-P2) and sedoheptulose 1,7-bisphosphate (Sed 1,7-P2) to fructose 6-phosphate and sedoheptulose 7-phosphate, respectively. The polypeptide is D-fructose 1,6-bisphosphatase class 2/sedoheptulose 1,7-bisphosphatase (Synechococcus sp. (strain JA-3-3Ab) (Cyanobacteria bacterium Yellowstone A-Prime)).